Here is a 713-residue protein sequence, read N- to C-terminus: Probable arginine--tRNA ligase, cytoplasmic (713 aa).

Residues 74–113 (KNKKNGVKATSTSSPSSSTSAPAEKKAKKDGKTGGAPPKQ) form a disordered region. Positions 81–95 (KATSTSSPSSSTSAP) are enriched in low complexity. A compositionally biased stretch (basic and acidic residues) spans 96-105 (AEKKAKKDGK). L-arginine contacts are provided by residues 252–254 (SPN), H263, Y438, D442, and Q466. Positions 252–263 (SPNIAKEMHVGH) match the 'HIGH' region motif. Residues 583–597 (NTAVYLLYAYTRIQS) form an interaction with tRNA region.

Belongs to the class-I aminoacyl-tRNA synthetase family.

The protein localises to the cytoplasm. Its subcellular location is the cytosol. The enzyme catalyses tRNA(Arg) + L-arginine + ATP = L-arginyl-tRNA(Arg) + AMP + diphosphate. Forms part of a macromolecular complex that catalyzes the attachment of specific amino acids to cognate tRNAs during protein synthesis. This is Probable arginine--tRNA ligase, cytoplasmic from Caenorhabditis elegans.